Consider the following 300-residue polypeptide: MTKASVAIVGSGNISTDLLYKLQRSEWLEPRWMIGIDPESEGLARARTMGLETSAEGVGWLLNQPEKPDLVFEATSAHVHRDSAPRYEAAGIRAVDLTPAAVGPAVVPPANLREHLGAPNVNMITCGGQATIPIVYAVSRVVDVPYAEIVASVASVSAGPGTRANIDEFTKTTSRGIETIGGAQRGKAIIILNPADPPMIMRDTIFCAIPEDADRAAITDSIHRVVADIQQYVPGYRLLNEPQFDDPSVVSGGQATVTTFVEVEGAGDFLPPYAGNLDIMTAAATKVGEEIAQKLLSVEA.

Serine 11 to isoleucine 14 lines the NAD(+) pocket. Cysteine 126 (acyl-thioester intermediate) is an active-site residue. NAD(+) contacts are provided by residues serine 157–asparagine 165 and asparagine 276.

It belongs to the acetaldehyde dehydrogenase family.

The catalysed reaction is acetaldehyde + NAD(+) + CoA = acetyl-CoA + NADH + H(+). This is Acetaldehyde dehydrogenase 3 from Rhodococcus opacus (strain B4).